Reading from the N-terminus, the 385-residue chain is Chorismate synthase (385 aa).

NADP(+)-binding residues include Arg40 and Arg46. FMN-binding positions include 128–130 (RAS), 248–249 (QA), Gly293, 308–312 (KAIPS), and Arg334.

Belongs to the chorismate synthase family. In terms of assembly, homotetramer. The cofactor is FMNH2.

The enzyme catalyses 5-O-(1-carboxyvinyl)-3-phosphoshikimate = chorismate + phosphate. Its pathway is metabolic intermediate biosynthesis; chorismate biosynthesis; chorismate from D-erythrose 4-phosphate and phosphoenolpyruvate: step 7/7. Its function is as follows. Catalyzes the anti-1,4-elimination of the C-3 phosphate and the C-6 proR hydrogen from 5-enolpyruvylshikimate-3-phosphate (EPSP) to yield chorismate, which is the branch point compound that serves as the starting substrate for the three terminal pathways of aromatic amino acid biosynthesis. This reaction introduces a second double bond into the aromatic ring system. The sequence is that of Chorismate synthase from Endomicrobium trichonymphae.